The primary structure comprises 158 residues: NAD(P)H-quinone oxidoreductase subunit J, chloroplastic (158 aa).

Belongs to the complex I 30 kDa subunit family. NDH is composed of at least 16 different subunits, 5 of which are encoded in the nucleus.

It is found in the plastid. The protein localises to the chloroplast thylakoid membrane. It carries out the reaction a plastoquinone + NADH + (n+1) H(+)(in) = a plastoquinol + NAD(+) + n H(+)(out). It catalyses the reaction a plastoquinone + NADPH + (n+1) H(+)(in) = a plastoquinol + NADP(+) + n H(+)(out). Its function is as follows. NDH shuttles electrons from NAD(P)H:plastoquinone, via FMN and iron-sulfur (Fe-S) centers, to quinones in the photosynthetic chain and possibly in a chloroplast respiratory chain. The immediate electron acceptor for the enzyme in this species is believed to be plastoquinone. Couples the redox reaction to proton translocation, and thus conserves the redox energy in a proton gradient. In Amborella trichopoda, this protein is NAD(P)H-quinone oxidoreductase subunit J, chloroplastic.